A 605-amino-acid chain; its full sequence is Elongation factor 4 (605 aa).

Residues 11 to 193 (KNIRNFSIIA…RLVDVIPAPE (183 aa)) form the tr-type G domain. GTP contacts are provided by residues 23–28 (DHGKST) and 140–143 (NKID).

The protein belongs to the TRAFAC class translation factor GTPase superfamily. Classic translation factor GTPase family. LepA subfamily.

Its subcellular location is the cell inner membrane. It catalyses the reaction GTP + H2O = GDP + phosphate + H(+). Its function is as follows. Required for accurate and efficient protein synthesis under certain stress conditions. May act as a fidelity factor of the translation reaction, by catalyzing a one-codon backward translocation of tRNAs on improperly translocated ribosomes. Back-translocation proceeds from a post-translocation (POST) complex to a pre-translocation (PRE) complex, thus giving elongation factor G a second chance to translocate the tRNAs correctly. Binds to ribosomes in a GTP-dependent manner. The protein is Elongation factor 4 of Acinetobacter baylyi (strain ATCC 33305 / BD413 / ADP1).